Here is a 493-residue protein sequence, read N- to C-terminus: Lysine--tRNA ligase (493 aa).

2 residues coordinate Mg(2+): E400 and E407.

The protein belongs to the class-II aminoacyl-tRNA synthetase family. Homodimer. The cofactor is Mg(2+).

The protein localises to the cytoplasm. It catalyses the reaction tRNA(Lys) + L-lysine + ATP = L-lysyl-tRNA(Lys) + AMP + diphosphate. This is Lysine--tRNA ligase from Syntrophomonas wolfei subsp. wolfei (strain DSM 2245B / Goettingen).